The sequence spans 366 residues: Inhibin alpha chain (366 aa).

An N-terminal signal peptide occupies residues 1 to 18; the sequence is MVLHLLLFLLLTPQGGHS. A propeptide spanning residues 19–61 is cleaved from the precursor; sequence CQGLELARELVLAKVRALFLDALGPPAVTREGGDPGVRRLPRR. A propeptide spans 62-232 (inhibin alpha N-terminal region); the sequence is HALGGFTHRG…PPSGGERARR (171 aa). 2 N-linked (GlcNAc...) asparagine glycosylation sites follow: Asn-146 and Asn-268. 3 disulfides stabilise this stretch: Cys-262–Cys-328, Cys-291–Cys-363, and Cys-295–Cys-365. Asn-302 carries N-linked (GlcNAc...) asparagine; partial glycosylation.

The protein belongs to the TGF-beta family. In terms of assembly, dimeric, linked by one or more disulfide bonds. Activin B is a dimer of alpha and beta-B. Inhibin A is a dimer of alpha and beta-A. Inhibin B is a dimer of alpha and beta-B. Interacts with TGFBR3L; this interaction regulates female fertility. Post-translationally, proteolytic processing yields a number of bioactive forms. The 20/23 kDa forms consist solely of the mature alpha chain, the 26/29 kDa forms consist of the most N-terminal propeptide linked through a disulfide bond to the mature alpha chain, the 50/53 kDa forms encompass the entire proprotein. Each type can be furthermore either mono- or diglycosylated, causing the mass difference. As to expression, originally found in ovary (granulosa cells) and testis (Sertoli cells), but widely distributed in many tissues including brain and placenta. In adrenal cortex expression is limited to the zona reticularis and the innermost zona fasciculata in the normal gland, extending centripetally into the zona fasciculata in hyperplasia. Also found in adrenocortical tumors. Also expressed in prostate epithelium of benign prostatic hyperplasia, in regions of basal cell hyperplasia and in nonmalignant regions of high grade prostate cancer. Only circulating inhibin B is found in male, whereas circulating inhibins A and B are found in female.

It localises to the secreted. Functionally, inhibins and activins inhibit and activate, respectively, the secretion of follitropin by the pituitary gland. Inhibins/activins are involved in regulating a number of diverse functions such as hypothalamic and pituitary hormone secretion, gonadal hormone secretion, germ cell development and maturation, erythroid differentiation, insulin secretion, nerve cell survival, embryonic axial development or bone growth, depending on their subunit composition. Inhibins appear to oppose the functions of activins. In terms of biological role, inhibin A is a dimer of alpha/INHA and beta-A/INHBA that functions as a feedback regulator in the hypothalamic-pituitary-gonadal (HPG) axis. Inhibits the secretion of FSH from the anterior pituitary gland by acting on pituitary gonadotrope cells. Antagonizes activin A by binding to the proteoglycan, betaglycan, and forming a stable complex with and, thereby, sequestering type II activin receptors while excluding type I receptor. Inhibin B is a dimer of alpha and beta-B that plays a crucial role in the regulation of the reproductive system by inhibiting the secretion of follicle-stimulating hormone (FSH) from the anterior pituitary gland. Thereby, maintains reproductive homeostasis in both males and females. Acts as a more potent suppressor of FSH release than inhibin A. Functions as competitive receptor antagonist binding activin type II receptors with high affinity in the presence of the TGF-beta type III coreceptor/TGFBR3L. The sequence is that of Inhibin alpha chain (INHA) from Homo sapiens (Human).